Consider the following 289-residue polypeptide: Ribosome-inactivating protein alpha-trichosanthin (289 aa).

The first 23 residues, Met-1–Gly-23, serve as a signal peptide directing secretion. Residue Glu-183 is part of the active site. The propeptide at Ala-271–Ile-289 is removed in mature form.

It belongs to the ribosome-inactivating protein family. Type 1 RIP subfamily.

It carries out the reaction Endohydrolysis of the N-glycosidic bond at one specific adenosine on the 28S rRNA.. Functionally, inactivates eukaryotic 60S ribosomal subunits. The chain is Ribosome-inactivating protein alpha-trichosanthin from Trichosanthes kirilowii (Chinese snake gourd).